The sequence spans 416 residues: Multifunctional CCA protein (416 aa).

Gly8 and Arg11 together coordinate ATP. CTP contacts are provided by Gly8 and Arg11. Mg(2+) contacts are provided by Asp21 and Asp23. ATP contacts are provided by Arg91, Arg138, and Arg141. CTP contacts are provided by Arg91, Arg138, and Arg141. The region spanning 229–331 (TGLHQELVSD…YELLQRCDAF (103 aa)) is the HD domain.

The protein belongs to the tRNA nucleotidyltransferase/poly(A) polymerase family. Bacterial CCA-adding enzyme type 1 subfamily. In terms of assembly, monomer. Can also form homodimers and oligomers. Requires Mg(2+) as cofactor. Ni(2+) serves as cofactor.

The catalysed reaction is a tRNA precursor + 2 CTP + ATP = a tRNA with a 3' CCA end + 3 diphosphate. It catalyses the reaction a tRNA with a 3' CCA end + 2 CTP + ATP = a tRNA with a 3' CCACCA end + 3 diphosphate. Its function is as follows. Catalyzes the addition and repair of the essential 3'-terminal CCA sequence in tRNAs without using a nucleic acid template. Adds these three nucleotides in the order of C, C, and A to the tRNA nucleotide-73, using CTP and ATP as substrates and producing inorganic pyrophosphate. tRNA 3'-terminal CCA addition is required both for tRNA processing and repair. Also involved in tRNA surveillance by mediating tandem CCA addition to generate a CCACCA at the 3' terminus of unstable tRNAs. While stable tRNAs receive only 3'-terminal CCA, unstable tRNAs are marked with CCACCA and rapidly degraded. In Xylella fastidiosa (strain 9a5c), this protein is Multifunctional CCA protein.